We begin with the raw amino-acid sequence, 64 residues long: Chassatide C7 (64 aa).

The propeptide at 1-35 is removed in mature form; sequence VLVASLVMLEAQSSDTIQVPDWGKRLLMNHDSNRV. 3 disulfides stabilise this stretch: C39-C55, C43-C57, and C48-C62.

As to expression, expressed in fruit, pedicel, root and stem but not in leaf (at protein level).

In terms of biological role, probably participates in a plant defense mechanism. Active against E.coli ATTC25922 but not against S.aureus ATCC 12600 or S.epidermidis ATCC 14990. Has cytotoxic and hemolytic activity. The sequence is that of Chassatide C7 from Chassalia chartacea (Chassalia curviflora).